The chain runs to 361 residues: uncharacterized protein (361 aa).

The N-terminal stretch at 1 to 28 (MSKSKFTKIIVVICIAAMFITGTSILSF) is a signal peptide.

This is an uncharacterized protein from Ruminiclostridium cellulolyticum (strain ATCC 35319 / DSM 5812 / JCM 6584 / H10) (Clostridium cellulolyticum).